Reading from the N-terminus, the 224-residue chain is ATP phosphoribosyltransferase (224 aa).

This sequence belongs to the ATP phosphoribosyltransferase family. Short subfamily. Heteromultimer composed of HisG and HisZ subunits.

It is found in the cytoplasm. The enzyme catalyses 1-(5-phospho-beta-D-ribosyl)-ATP + diphosphate = 5-phospho-alpha-D-ribose 1-diphosphate + ATP. The protein operates within amino-acid biosynthesis; L-histidine biosynthesis; L-histidine from 5-phospho-alpha-D-ribose 1-diphosphate: step 1/9. Its function is as follows. Catalyzes the condensation of ATP and 5-phosphoribose 1-diphosphate to form N'-(5'-phosphoribosyl)-ATP (PR-ATP). Has a crucial role in the pathway because the rate of histidine biosynthesis seems to be controlled primarily by regulation of HisG enzymatic activity. The sequence is that of ATP phosphoribosyltransferase from Cupriavidus necator (strain ATCC 17699 / DSM 428 / KCTC 22496 / NCIMB 10442 / H16 / Stanier 337) (Ralstonia eutropha).